The sequence spans 115 residues: NADH-ubiquinone oxidoreductase chain 3 (115 aa).

The next 3 helical transmembrane spans lie at 3-23 (LVMA…IAFW), 55-75 (FFLV…LLPL), and 86-106 (TMLI…AYEW).

The protein belongs to the complex I subunit 3 family. Core subunit of respiratory chain NADH dehydrogenase (Complex I) which is composed of 45 different subunits. Interacts with TMEM186. Interacts with TMEM242.

The protein localises to the mitochondrion inner membrane. It carries out the reaction a ubiquinone + NADH + 5 H(+)(in) = a ubiquinol + NAD(+) + 4 H(+)(out). Core subunit of the mitochondrial membrane respiratory chain NADH dehydrogenase (Complex I) which catalyzes electron transfer from NADH through the respiratory chain, using ubiquinone as an electron acceptor. Essential for the catalytic activity of complex I. The chain is NADH-ubiquinone oxidoreductase chain 3 from Hippopotamus amphibius (Hippopotamus).